The chain runs to 417 residues: Multifunctional CCA protein (417 aa).

Gly-8 and Arg-11 together coordinate ATP. Residues Gly-8 and Arg-11 each coordinate CTP. Mg(2+) contacts are provided by Asp-21 and Asp-23. ATP-binding residues include Arg-91, Arg-137, and Arg-140. Residues Arg-91, Arg-137, and Arg-140 each contribute to the CTP site. Positions 225 to 326 constitute an HD domain; it reads SGIHTLMTLQ…LNVLKKTDAF (102 aa).

Belongs to the tRNA nucleotidyltransferase/poly(A) polymerase family. Bacterial CCA-adding enzyme type 1 subfamily. Monomer. Can also form homodimers and oligomers. It depends on Mg(2+) as a cofactor. Ni(2+) serves as cofactor.

The enzyme catalyses a tRNA precursor + 2 CTP + ATP = a tRNA with a 3' CCA end + 3 diphosphate. It carries out the reaction a tRNA with a 3' CCA end + 2 CTP + ATP = a tRNA with a 3' CCACCA end + 3 diphosphate. In terms of biological role, catalyzes the addition and repair of the essential 3'-terminal CCA sequence in tRNAs without using a nucleic acid template. Adds these three nucleotides in the order of C, C, and A to the tRNA nucleotide-73, using CTP and ATP as substrates and producing inorganic pyrophosphate. tRNA 3'-terminal CCA addition is required both for tRNA processing and repair. Also involved in tRNA surveillance by mediating tandem CCA addition to generate a CCACCA at the 3' terminus of unstable tRNAs. While stable tRNAs receive only 3'-terminal CCA, unstable tRNAs are marked with CCACCA and rapidly degraded. This Neisseria meningitidis serogroup C (strain 053442) protein is Multifunctional CCA protein.